The following is a 496-amino-acid chain: Cobyric acid synthase (496 aa).

The 191-residue stretch at 252–442 (DLAVAVIRLP…LHGCFDSDTY (191 aa)) folds into the GATase cobBQ-type domain. The active-site Nucleophile is Cys-333. Residue His-434 is part of the active site.

Belongs to the CobB/CobQ family. CobQ subfamily.

It functions in the pathway cofactor biosynthesis; adenosylcobalamin biosynthesis. Its function is as follows. Catalyzes amidations at positions B, D, E, and G on adenosylcobyrinic A,C-diamide. NH(2) groups are provided by glutamine, and one molecule of ATP is hydrogenolyzed for each amidation. This chain is Cobyric acid synthase, found in Desulforudis audaxviator (strain MP104C).